We begin with the raw amino-acid sequence, 448 residues long: TRAF family member-associated NF-kappa-B activator (448 aa).

Positions 35 to 65 are necessary for interaction with ZC3H12A; sequence MDKNIGEQLNRAYEAFRQACMDRDSAVRELQ. Residues 60 to 98 adopt a coiled-coil conformation; it reads AVRELQQKQTENYEQRIREQQEQLSFQQNLIDRLKSQLL. The segment at 105 to 224 is necessary for interaction with TRAF6; sequence DNSYGYVPLL…QCTDKTEKQE (120 aa). The interval 166–205 is interaction with TBK1 and IKBKE; the sequence is HERDNIEKTFWDLKEEFHRICLLAKAQKDHLSKLNIPDIA. Positions 205–224 are TRAF family member interaction; the sequence is ATDTQCSVPIQCTDKTEKQE. Phosphoserine is present on serine 211. At threonine 246 the chain carries Phosphothreonine. Residues serine 258, serine 261, serine 377, and serine 380 each carry the phosphoserine modification. The UBZ1-type zinc finger occupies 416–443; the sequence is PLVCEFCQELFPPSITSRGDFLRHLNTH. 4 residues coordinate Zn(2+): cysteine 419, cysteine 422, histidine 439, and histidine 443.

In terms of assembly, homodimer. Found in a deubiquitination complex with TANK, USP10 and ZC3H12A; this complex inhibits genotoxic stress- or interleukin-1-beta-mediated NF-kappaB activation by promoting IKBKG or TRAF6 deubiquitination. Interacts with IKBKG; this interaction increases in response to DNA damage. Interacts with TRAF6; this interaction increases in response to DNA damage and recruits USP10 to the ubiquitinated TRAF6. Interacts with USP10; this interaction increases in response to DNA damage. Interacts with TBK1 and IKBKE. Also interacts with TRAF1, TRAF2, and TRAF3 by binding to their TRAF-C domains; the interaction with TRAF2 is disrupted by the phosphorylation of TANK by IKBKE. Interacts more strongly with TRAF1 and TRAF2 than TRAF3. Part of a ternary complex consisting of TANK, IKBKB and IKBKG. Interacts with IKBKG; the interaction is enhanced by IKBKE and TBK1. In terms of tissue distribution, heart, brain, spleen, lung, liver, skeletal muscle, kidney and testis.

The protein resides in the cytoplasm. Adapter protein involved in I-kappa-B-kinase (IKK) regulation which constitutively binds TBK1 and IKBKE playing a role in antiviral innate immunity. Acts as a regulator of TRAF function by maintaining them in a latent state. Blocks TRAF2 binding to LMP1 and inhibits LMP1-mediated NF-kappa-B activation. Negatively regulates NF-kappaB signaling and cell survival upon DNA damage. Plays a role as an adapter to assemble ZC3H12A, USP10 in a deubiquitination complex which plays a negative feedback response to attenuate NF-kappaB activation through the deubiquitination of IKBKG or TRAF6 in response to interleukin-1-beta (IL1B) stimulation or upon DNA damage. Promotes UBP10-induced deubiquitination of TRAF6 in response to DNA damage. May control negatively TRAF2-mediated NF-kappa-B activation signaled by CD40, TNFR1 and TNFR2. Essential for the efficient induction of IRF-dependent transcription following infection with Sendai virus. The chain is TRAF family member-associated NF-kappa-B activator (Tank) from Mus musculus (Mouse).